A 118-amino-acid chain; its full sequence is UPF0342 protein BPUM_0928 (118 aa).

It belongs to the UPF0342 family.

This chain is UPF0342 protein BPUM_0928, found in Bacillus pumilus (strain SAFR-032).